Here is a 205-residue protein sequence, read N- to C-terminus: MIGRLKGILVEKHAPEVLIDVGGVGYELQMPLTSFYELPLPGAEVIVYTHFVVREDAQLLYGFIHKEERSLFRLLIKANGVGPKLALTILSGMTAKEFIGCLERDDIATLIKLPGVGKKTAERLLVEMRDKLKSLMEASMGAEREFVLKSNFTPAPVAATVEEDAIAALLSLGYKPQQASKAVSSAFQEGMDPEQLIKAALKSML.

Residues 1 to 64 (MIGRLKGILV…EDAQLLYGFI (64 aa)) form a domain I region. Positions 65–143 (HKEERSLFRL…SLMEASMGAE (79 aa)) are domain II. Residues 144–156 (REFVLKSNFTPAP) are flexible linker. Residues 157–205 (VAATVEEDAIAALLSLGYKPQQASKAVSSAFQEGMDPEQLIKAALKSML) form a domain III region.

It belongs to the RuvA family. As to quaternary structure, homotetramer. Forms an RuvA(8)-RuvB(12)-Holliday junction (HJ) complex. HJ DNA is sandwiched between 2 RuvA tetramers; dsDNA enters through RuvA and exits via RuvB. An RuvB hexamer assembles on each DNA strand where it exits the tetramer. Each RuvB hexamer is contacted by two RuvA subunits (via domain III) on 2 adjacent RuvB subunits; this complex drives branch migration. In the full resolvosome a probable DNA-RuvA(4)-RuvB(12)-RuvC(2) complex forms which resolves the HJ.

It localises to the cytoplasm. The RuvA-RuvB-RuvC complex processes Holliday junction (HJ) DNA during genetic recombination and DNA repair, while the RuvA-RuvB complex plays an important role in the rescue of blocked DNA replication forks via replication fork reversal (RFR). RuvA specifically binds to HJ cruciform DNA, conferring on it an open structure. The RuvB hexamer acts as an ATP-dependent pump, pulling dsDNA into and through the RuvAB complex. HJ branch migration allows RuvC to scan DNA until it finds its consensus sequence, where it cleaves and resolves the cruciform DNA. The polypeptide is Holliday junction branch migration complex subunit RuvA (Shewanella amazonensis (strain ATCC BAA-1098 / SB2B)).